Here is a 566-residue protein sequence, read N- to C-terminus: Mitochondrial distribution and morphology protein 34 (566 aa).

An SMP-LTD domain is found at 1–195 (MAFNFNWSPL…LPAIIHRLSL (195 aa)). Disordered stretches follow at residues 212 to 237 (PEQTAGEGPGQDPLASPPQDPVDSLG), 349 to 401 (GYGL…NPSV), 432 to 518 (PERR…SSST), and 539 to 566 (KLMPTSSCGGAFWGRPDHEEYPPPAYGQ). Over residues 358-370 (RHSKAHSRKRKKR) the composition is skewed to basic residues. Polar residues predominate over residues 380–401 (TSDTASVSDESAYTETASNPSV). Residues 444–454 (PRRDIATEMLR) are compositionally biased toward basic and acidic residues.

This sequence belongs to the MDM34 family. As to quaternary structure, component of the ER-mitochondria encounter structure (ERMES) or MDM complex, composed of mmm1, mdm10, mdm12 and mdm34.

Its subcellular location is the mitochondrion outer membrane. Component of the ERMES/MDM complex, which serves as a molecular tether to connect the endoplasmic reticulum (ER) and mitochondria. Components of this complex are involved in the control of mitochondrial shape and protein biogenesis, and function in nonvesicular lipid trafficking between the ER and mitochondria. Mdm34 is required for the interaction of the ER-resident membrane protein mmm1 and the outer mitochondrial membrane-resident beta-barrel protein mdm10. This chain is Mitochondrial distribution and morphology protein 34, found in Aspergillus flavus (strain ATCC 200026 / FGSC A1120 / IAM 13836 / NRRL 3357 / JCM 12722 / SRRC 167).